Here is a 64-residue protein sequence, read N- to C-terminus: Prokaryotic ubiquitin-like protein UBact (64 aa).

Composition is skewed to basic and acidic residues over residues 1–12 (MSDLFRMEERRQ) and 33–64 (PDVKRPDTSDLLRRMKRVDPDAARRYRQRSGE). The interval 1 to 64 (MSDLFRMEER…ARRYRQRSGE (64 aa)) is disordered. An Isoglutamyl lysine isopeptide (Glu-Lys) (interchain with K-? in acceptor proteins) cross-link involves residue Glu64.

This sequence belongs to the ubiquitin-like protein UBact family.

In terms of biological role, may function as a protein modifier covalently attached to lysine residues of substrate proteins. This may serve to target the modified proteins for degradation by proteasomes. This Chthonomonas calidirosea (strain DSM 23976 / ICMP 18418 / T49) protein is Prokaryotic ubiquitin-like protein UBact.